Here is a 157-residue protein sequence, read N- to C-terminus: MFDILMYLFETYIQNESEAMVDHELLTDELTRAGFHQDEIYKALNWLEKLTALQDTDAYPYLTRVGSKSVRIYTSEEMQLLDTPSRGFILFLEQVNVLDFTTREMVIDRVMELDTKYFSMDDLKWVILMVLFNVPGKESAYSQLEDLIFEEQEGPLH.

The protein belongs to the Smg family.

This is Protein Smg homolog from Colwellia psychrerythraea (strain 34H / ATCC BAA-681) (Vibrio psychroerythus).